A 255-amino-acid polypeptide reads, in one-letter code: CCAAT/enhancer-binding protein delta (255 aa).

3 disordered regions span residues 1 to 42 (MTCA…AAPA), 91 to 121 (GGPA…PGSL), and 138 to 206 (PAAQ…QEMQ). Lysine 107 is covalently cross-linked (Glycyl lysine isopeptide (Lys-Gly) (interchain with G-Cter in SUMO)). Over residues 141-161 (QPTPPASPDPPRRSPAPPAPG) the composition is skewed to pro residues. The segment covering 163 to 187 (ARDKAAGKRGPDRGSPEYRQRRERN) has biased composition (basic and acidic residues). The bZIP domain maps to 177–240 (SPEYRQRRER…AGLRRFFKQL (64 aa)). Positions 181 to 208 (RQRRERNNIAVRKSRDKAKRRNQEMQQK) are basic motif. A leucine-zipper region spans residues 212–240 (LSAENEKLQQRVEQLTRDLAGLRRFFKQL).

The protein belongs to the bZIP family. C/EBP subfamily. Binds DNA as a homodimer and as a heterodimer. Can form stable heterodimers with CEBPA, CEBPB and CEBPE. Directly interacts with SPI1/PU.1; this interaction does not affect DNA-binding properties of each partner. Interacts with PRDM16.

The protein localises to the nucleus. Its function is as follows. Transcription activator that recognizes two different DNA motifs: the CCAAT homology common to many promoters and the enhanced core homology common to many enhancers. Important transcription factor regulating the expression of genes involved in immune and inflammatory responses. Transcriptional activator that enhances IL6 transcription alone and as heterodimer with CEBPB. The sequence is that of CCAAT/enhancer-binding protein delta (CEBPD) from Ovis aries (Sheep).